Reading from the N-terminus, the 401-residue chain is Glycerol-1-phosphate dehydrogenase [NAD(P)+] (401 aa).

NAD(+) contacts are provided by residues Asp-57, 118–122, and 140–143; these read GTIHD and TAPS. Asp-145 provides a ligand contact to substrate. Ser-149 is a binding site for NAD(+). Position 192 (Asp-192) interacts with substrate. The Ni(2+) site is built by Asp-192 and His-272. His-276 contributes to the substrate binding site. Ni(2+) is bound at residue His-292.

This sequence belongs to the glycerol-1-phosphate dehydrogenase family. As to quaternary structure, homodimer. The cofactor is Ni(2+).

It is found in the cytoplasm. The catalysed reaction is sn-glycerol 1-phosphate + NAD(+) = dihydroxyacetone phosphate + NADH + H(+). The enzyme catalyses sn-glycerol 1-phosphate + NADP(+) = dihydroxyacetone phosphate + NADPH + H(+). In terms of biological role, catalyzes the NAD(P)H-dependent reduction of dihydroxyacetonephosphate (DHAP or glycerone phosphate) to glycerol 1-phosphate (G1P). The G1P thus generated is probably used for the synthesis of phosphoglycerolipids in Gram-positive bacterial species. The chain is Glycerol-1-phosphate dehydrogenase [NAD(P)+] from Bacillus licheniformis (strain ATCC 14580 / DSM 13 / JCM 2505 / CCUG 7422 / NBRC 12200 / NCIMB 9375 / NCTC 10341 / NRRL NRS-1264 / Gibson 46).